The primary structure comprises 702 residues: Elongation factor G (702 aa).

The tr-type G domain maps to 9–292; it reads DRTRNIGIMA…AVVDYLPSPL (284 aa). GTP is bound by residues 18 to 25, 91 to 95, and 145 to 148; these read AHIDAGKT, DTPGH, and NKMD.

Belongs to the TRAFAC class translation factor GTPase superfamily. Classic translation factor GTPase family. EF-G/EF-2 subfamily.

The protein resides in the cytoplasm. Catalyzes the GTP-dependent ribosomal translocation step during translation elongation. During this step, the ribosome changes from the pre-translocational (PRE) to the post-translocational (POST) state as the newly formed A-site-bound peptidyl-tRNA and P-site-bound deacylated tRNA move to the P and E sites, respectively. Catalyzes the coordinated movement of the two tRNA molecules, the mRNA and conformational changes in the ribosome. The sequence is that of Elongation factor G from Oenococcus oeni (strain ATCC BAA-331 / PSU-1).